The chain runs to 466 residues: Adenosylhomocysteinase (466 aa).

Positions 57, 132, and 192 each coordinate substrate. NAD(+) is bound at residue 193-195 (TTT). The substrate site is built by Lys-222 and Asp-226. NAD(+) is bound by residues Asn-227, 256-261 (GYGDVG), Glu-279, Asn-314, 335-337 (IGH), and Asn-380.

Belongs to the adenosylhomocysteinase family. It depends on NAD(+) as a cofactor.

Its subcellular location is the cytoplasm. It carries out the reaction S-adenosyl-L-homocysteine + H2O = L-homocysteine + adenosine. It participates in amino-acid biosynthesis; L-homocysteine biosynthesis; L-homocysteine from S-adenosyl-L-homocysteine: step 1/1. Functionally, may play a key role in the regulation of the intracellular concentration of adenosylhomocysteine. In Rhizobium meliloti (strain 1021) (Ensifer meliloti), this protein is Adenosylhomocysteinase.